The following is a 126-amino-acid chain: BPTI/Kunitz domain-containing protein (126 aa).

BPTI/Kunitz inhibitor domains follow at residues 14–64 (CQLP…RRRC) and 70–120 (CSLP…RFQC). Disulfide bonds link cysteine 14-cysteine 64, cysteine 23-cysteine 47, cysteine 39-cysteine 60, cysteine 70-cysteine 120, cysteine 79-cysteine 103, and cysteine 95-cysteine 116.

In terms of tissue distribution, component of the acid-soluble and acid-insoluble organic matrix of calcified shell layers (at protein level).

Its subcellular location is the secreted. Its function is as follows. Serine protease inhibitor. The chain is BPTI/Kunitz domain-containing protein from Haliotis asinina (Donkey's ear abalone).